Reading from the N-terminus, the 158-residue chain is MFRIGQGFDVHQLVEGRPLIIGGITIPYEKGLLGHSDADVLLHTIADACLGAVGEGDIGKHFPDTDPEFKDADSFKLLRHVWMIVKEKGYTLGNLDCTIIAQKPKMAPYIEDMRARIAEGLEAEISQINVKATTTEKLGFTGRAEGIAAQASVLLQKV.

A divalent metal cation is bound by residues aspartate 9 and histidine 11. Residues 9–11 and 35–36 each bind 4-CDP-2-C-methyl-D-erythritol 2-phosphate; these read DVH and HS. Position 43 (histidine 43) interacts with a divalent metal cation. Residues 57-59, 62-66, 101-107, 133-136, phenylalanine 140, and arginine 143 each bind 4-CDP-2-C-methyl-D-erythritol 2-phosphate; these read DIG, FPDTD, AQKPKMA, and TTTE.

It belongs to the IspF family. In terms of assembly, homotrimer. It depends on a divalent metal cation as a cofactor.

It carries out the reaction 4-CDP-2-C-methyl-D-erythritol 2-phosphate = 2-C-methyl-D-erythritol 2,4-cyclic diphosphate + CMP. The protein operates within isoprenoid biosynthesis; isopentenyl diphosphate biosynthesis via DXP pathway; isopentenyl diphosphate from 1-deoxy-D-xylulose 5-phosphate: step 4/6. In terms of biological role, involved in the biosynthesis of isopentenyl diphosphate (IPP) and dimethylallyl diphosphate (DMAPP), two major building blocks of isoprenoid compounds. Catalyzes the conversion of 4-diphosphocytidyl-2-C-methyl-D-erythritol 2-phosphate (CDP-ME2P) to 2-C-methyl-D-erythritol 2,4-cyclodiphosphate (ME-CPP) with a corresponding release of cytidine 5-monophosphate (CMP). In Bacillus licheniformis (strain ATCC 14580 / DSM 13 / JCM 2505 / CCUG 7422 / NBRC 12200 / NCIMB 9375 / NCTC 10341 / NRRL NRS-1264 / Gibson 46), this protein is 2-C-methyl-D-erythritol 2,4-cyclodiphosphate synthase.